Consider the following 364-residue polypeptide: MAHQFPALTSEQKKALSETARRIVANGKGILAADESVGTMGNRLQRIKVENTEENRRQFRELLFTVDSSVSQSIGGVILFHETLYQKDGQGKLFRDILKEKGIVVGIKLDQGVAPLAGTNKETTVQGLDGLSERCAQYKKDGADFGKWRAVLKIDNQCPSHLAIQENANTLARYASICQQNGLVPIVEPEVIPDGSHDMEHCQYVTEKVLAAVYKALNDHHVYLEGTLLKPNMVTAGHACTKKYTPEQVAMATVTALHRTVPAAVPGICFLSGGMSEEDATLNLNAINLCPLPKPWKLSFSYGRALQASALAAWGGKAENKKTTQEAFMKRALANSQAAKGQYVHMGSSGSASTQSLFTASYTY.

Alanine 2 is subject to N-acetylalanine. Lysine 13 carries the N6-succinyllysine modification. Position 36 is a phosphoserine (serine 36). At threonine 39 the chain carries Phosphothreonine. Arginine 43 provides a ligand contact to beta-D-fructose 1,6-bisphosphate. Position 119 is a phosphothreonine (threonine 119). Lysine 121 is modified (N6-succinyllysine). The residue at position 132 (serine 132) is a Phosphoserine. Residue glutamate 188 is the Proton acceptor of the active site. Lysine 230 serves as the catalytic Schiff-base intermediate with dihydroxyacetone-P. 4 positions are modified to phosphoserine: serine 272, serine 276, serine 299, and serine 301. A beta-D-fructose 1,6-bisphosphate-binding site is contributed by 272–274 (SGG). Arginine 304 contributes to the beta-D-fructose 1,6-bisphosphate binding site. Serine 309 is subject to Phosphoserine. Lysine 317 carries the N6-succinyllysine modification.

This sequence belongs to the class I fructose-bisphosphate aldolase family. As to quaternary structure, homotetramer. Interacts with BBS1, BBS2, BBS4 and BBS7. Forms a ternary complex with G6PD and TP53; this interaction is direct.

The protein resides in the cytoplasm. It is found in the cytosol. The protein localises to the cytoskeleton. Its subcellular location is the microtubule organizing center. It localises to the centrosome. The protein resides in the centriolar satellite. The catalysed reaction is beta-D-fructose 1,6-bisphosphate = D-glyceraldehyde 3-phosphate + dihydroxyacetone phosphate. It carries out the reaction beta-D-fructose 1-phosphate = D-glyceraldehyde + dihydroxyacetone phosphate. It participates in carbohydrate degradation; glycolysis; D-glyceraldehyde 3-phosphate and glycerone phosphate from D-glucose: step 4/4. It functions in the pathway carbohydrate biosynthesis; gluconeogenesis. Its pathway is carbohydrate metabolism; fructose metabolism. Functionally, catalyzes the aldol cleavage of fructose 1,6-biphosphate to form two triosephosphates dihydroxyacetone phosphate and D-glyceraldehyde 3-phosphate in glycolysis as well as the reverse stereospecific aldol addition reaction in gluconeogenesis. In fructolysis, metabolizes fructose 1-phosphate derived from the phosphorylation of dietary fructose by fructokinase into dihydroxyacetone phosphate and D-glyceraldehyde. Acts as an adapter independently of its enzymatic activity, exerts a tumor suppressor role by stabilizing the ternary complex with G6PD and TP53 to inhibit G6PD activity and keep oxidative pentose phosphate metabolism in check. The polypeptide is Fructose-bisphosphate aldolase B (ALDOB) (Bos taurus (Bovine)).